The chain runs to 57 residues: Large ribosomal subunit protein bL32c (57 aa).

It belongs to the bacterial ribosomal protein bL32 family.

The protein resides in the plastid. It is found in the chloroplast. In Amborella trichopoda, this protein is Large ribosomal subunit protein bL32c.